A 237-amino-acid polypeptide reads, in one-letter code: Phosphoribosylaminoimidazole-succinocarboxamide synthase (237 aa).

This sequence belongs to the SAICAR synthetase family.

It catalyses the reaction 5-amino-1-(5-phospho-D-ribosyl)imidazole-4-carboxylate + L-aspartate + ATP = (2S)-2-[5-amino-1-(5-phospho-beta-D-ribosyl)imidazole-4-carboxamido]succinate + ADP + phosphate + 2 H(+). The protein operates within purine metabolism; IMP biosynthesis via de novo pathway; 5-amino-1-(5-phospho-D-ribosyl)imidazole-4-carboxamide from 5-amino-1-(5-phospho-D-ribosyl)imidazole-4-carboxylate: step 1/2. This is Phosphoribosylaminoimidazole-succinocarboxamide synthase from Listeria monocytogenes serotype 4a (strain HCC23).